Here is a 467-residue protein sequence, read N- to C-terminus: 6-phosphogluconate dehydrogenase, decarboxylating (467 aa).

Residues 9–14 (GLGVMG), 32–34 (NYT), 73–75 (VTA), and N101 each bind NADP(+). Substrate-binding positions include N101 and 127-129 (SGG). Catalysis depends on K181, which acts as the Proton acceptor. 184 to 185 (HN) provides a ligand contact to substrate. The active-site Proton donor is the E188. Substrate contacts are provided by Y189, K259, R286, and H451.

It belongs to the 6-phosphogluconate dehydrogenase family. In terms of assembly, homodimer.

It carries out the reaction 6-phospho-D-gluconate + NADP(+) = D-ribulose 5-phosphate + CO2 + NADPH. It functions in the pathway carbohydrate degradation; pentose phosphate pathway; D-ribulose 5-phosphate from D-glucose 6-phosphate (oxidative stage): step 3/3. Catalyzes the oxidative decarboxylation of 6-phosphogluconate to ribulose 5-phosphate and CO(2), with concomitant reduction of NADP to NADPH. This is 6-phosphogluconate dehydrogenase, decarboxylating (gntZ) from Bacillus licheniformis.